The chain runs to 841 residues: 27S pre-rRNA (guanosine(2922)-2'-O)-methyltransferase (841 aa).

Residues Gly58, Trp60, Asp78, Asp94, and Asp119 each coordinate S-adenosyl-L-methionine. Lys159 serves as the catalytic Proton acceptor. Residues Gln360 to Met389 adopt a coiled-coil conformation. Residues Ser455 and Ser464 each carry the phosphoserine modification. Disordered stretches follow at residues Arg480–Ala534 and Asn565–Asp654. Basic and acidic residues predominate over residues Ser505 to Ile517. Residues Glu518 to Ala534 show a composition bias toward acidic residues. The residue at position 529 (Ser529) is a Phosphoserine. Positions Asn574–Ser585 are enriched in polar residues. The segment covering His598–Glu607 has biased composition (basic and acidic residues). 2 stretches are compositionally biased toward acidic residues: residues Ala608–Phe621 and Ala629–Glu641. A compositionally biased stretch (basic and acidic residues) spans Glu642 to Asp654.

The protein belongs to the class I-like SAM-binding methyltransferase superfamily. RNA methyltransferase RlmE family. SPB1 subfamily. As to quaternary structure, component of the nucleolar and nucleoplasmic pre-60S ribosomal particle. Interacts with the snoRNA-associated proteins NOP1 and NOP58.

Its subcellular location is the nucleus. It localises to the nucleolus. The catalysed reaction is guanosine(2922) in 27S pre-rRNA + S-adenosyl-L-methionine = 2'-O-methylguanosine(2922) in 27S pre-rRNA + S-adenosyl-L-homocysteine + H(+). Required for proper assembly of pre-ribosomal particles during the biogenesis of the 60S ribosomal subunit. Specifically methylates the guanosine in position 2922 of the 25S rRNA at the stage of 27S pre-rRNA maturation. Also methylates the uridine in position 2921 in the absence of methylation of this residue guided by snoRNA snR52 at the stage of 35S pre-rRNA maturation. In Saccharomyces cerevisiae (strain ATCC 204508 / S288c) (Baker's yeast), this protein is 27S pre-rRNA (guanosine(2922)-2'-O)-methyltransferase.